The following is a 148-amino-acid chain: Secretory phospholipase A2 (148 aa).

The signal sequence occupies residues 1-23 (MKLSVLLALGASSLAAAAPAATA). Asparagine 61 is a glycosylation site (N-linked (GlcNAc...) asparagine). The cysteines at positions 62 and 78 are disulfide-linked. Histidine 81 is a catalytic residue. A Ca(2+)-binding site is contributed by aspartate 82.

Belongs to the phospholipase A2 family. Ca(2+) serves as cofactor.

It localises to the secreted. The catalysed reaction is a 1,2-diacyl-sn-glycero-3-phosphocholine + H2O = a 1-acyl-sn-glycero-3-phosphocholine + a fatty acid + H(+). In terms of biological role, secretory phospholipase that catalyzes the calcium-dependent hydrolysis of the 2-acyl groups in 3-sn-phosphoglycerides. Increases the ability to utilize host-derived nutrients and lipids, and promotes lipid dropplets accumulation. Plays a role in virulence. This chain is Secretory phospholipase A2, found in Arthroderma benhamiae (strain ATCC MYA-4681 / CBS 112371) (Trichophyton mentagrophytes).